We begin with the raw amino-acid sequence, 48 residues long: Protein TUNAR (48 aa).

A disordered region spans residues Met1–Glu20. The span at Asp10 to Glu20 shows a compositional bias: basic and acidic residues. Residues Leu24 to Ile44 traverse the membrane as a helical segment.

In terms of assembly, interacts with ATPase ATP2A2/SERCA2. Interacts with ATPase ATP2A3/SERCA3; the interaction occurs at low levels in low glucose conditions and is increased by high glucose levels. Highly expressed in pancreatic islets where it is enriched in the insulin-producing beta cells.

It localises to the endoplasmic reticulum membrane. It is found in the extracellular vesicle membrane. Functionally, in neurons, plays a role in the regulation of intracellular Ca(2+), possibly by acting as an activator of ATP2A2/SERCA2, thus increasing the efficiency with which Ca(2+) is removed from the cytoplasm. Inhibits differentiation of embryonic stem cells into neurons and inhibits neurite outgrowth, likely as a result of its role in intracellular Ca(2+) regulation. In pancreatic beta cells, lowers Ca(2+) levels in the endoplasmic reticulum and enhances glucose-stimulated insulin secretion. This is Protein TUNAR from Homo sapiens (Human).